We begin with the raw amino-acid sequence, 429 residues long: Polypyrimidine tract-binding protein homolog 2 (429 aa).

Position 2 is an N-acetylserine (S2). 3 consecutive RRM domains span residues 18–96, 110–197, and 243–323; these read KVLH…YSNR, GNVL…YSAH, and SNVL…YSRH. The interval 331–429 is disordered; sequence NNDRSRDYTM…QHYGGPGPMH (99 aa). The span at 367-381 shows a compositional bias: low complexity; that stretch reads GGSHHQQQQQPQGGW. Residues 382 to 397 show a composition bias toward gly residues; it reads VQPGGQGSMGMGGGGH.

It localises to the nucleus. In terms of biological role, plays a role in pre-mRNA splicing. Binds to the polypyrimidine tract of introns. May promote the binding of U2 snRNP to pre-mRNA. This Arabidopsis thaliana (Mouse-ear cress) protein is Polypyrimidine tract-binding protein homolog 2.